Reading from the N-terminus, the 78-residue chain is Ferredoxin (78 aa).

2 consecutive 4Fe-4S ferredoxin-type domains span residues 2-29 (FVIT…HEGP) and 30-59 (DQYY…QEEF). Positions 8 and 16 each coordinate [3Fe-4S] cluster. 4 residues coordinate [4Fe-4S] cluster: cysteine 20, cysteine 39, cysteine 42, and cysteine 45. Cysteine 49 is a binding site for [3Fe-4S] cluster.

It depends on [3Fe-4S] cluster as a cofactor. The cofactor is [4Fe-4S] cluster.

Its function is as follows. Ferredoxins are iron-sulfur proteins that transfer electrons in a wide variety of metabolic reactions. This chain is Ferredoxin, found in Alicyclobacillus acidocaldarius subsp. acidocaldarius (Bacillus acidocaldarius).